The primary structure comprises 214 residues: Transmembrane emp24 domain-containing protein p24beta3 (214 aa).

Residues 1–27 (MERRQAKIHVFVLIGLILLNSINQISS) form the signal peptide. The Lumenal segment spans residues 28 to 178 (LSVTVNDEEC…RHTNESTRKR (151 aa)). The GOLD domain maps to 35–122 (EECVQEYVLY…PETVSFYIHV (88 aa)). Residues 140-158 (VNVKIAELREALESVVAEQ) adopt a coiled-coil conformation. Omega-N-methylated arginine is present on residues Arg164 and Arg169. N-linked (GlcNAc...) asparagine glycosylation is present at Asn172. Residues 179 to 199 (VIFYTVGEYIFLAAASGLQVL) form a helical membrane-spanning segment. At 200-214 (YIRKLFSKSVAYNRV) the chain is on the cytoplasmic side. Positions 204 to 205 (LF) match the COPII vesicle coat-binding motif. Positions 204–214 (LFSKSVAYNRV) match the COPI vesicle coat-binding motif. The Required for the export from the endoplasmic reticulum to the Golgi motif lies at 213–214 (RV).

It belongs to the EMP24/GP25L family. Probably oligomerizes with other members of the EMP24/GP25L family. Associates with the COPI vesicle coat (coatomer). Associates with the COPII vesicle coat (coatomer).

Its subcellular location is the golgi apparatus. It is found in the cis-Golgi network membrane. It localises to the golgi stack membrane. In terms of biological role, involved in vesicular protein trafficking. Mainly functions in the early secretory pathway but also in post-Golgi membranes. Thought to act as cargo receptor at the lumenal side for incorporation of secretory cargo molecules into transport vesicles and to be involved in vesicle coat formation at the cytoplasmic side. In Arabidopsis thaliana (Mouse-ear cress), this protein is Transmembrane emp24 domain-containing protein p24beta3.